The primary structure comprises 562 residues: Phosphoglucomutase-1 (562 aa).

N-acetylmethionine is present on Met1. Residue Lys16 is modified to N6-acetyllysine. Residue Arg23 coordinates alpha-D-glucose 1,6-bisphosphate. A Phosphothreonine modification is found at Thr115. An alpha-D-glucose 1,6-bisphosphate-binding site is contributed by Ser117. Ser117 (phosphoserine intermediate) is an active-site residue. Ser117 provides a ligand contact to Mg(2+). A phosphoserine mark is found at Ser117 and Ser134. The residue at position 185 (Thr185) is a Phosphothreonine. Ser213 carries the phosphoserine modification. The Mg(2+) site is built by Asp288, Asp290, and Asp292. Positions 292 and 293 each coordinate alpha-D-glucose 1,6-bisphosphate. Lys349 is modified (N6-acetyllysine). Tyr353 carries the phosphotyrosine modification. Thr357 contacts alpha-D-glucose 1,6-bisphosphate. Ser369 bears the Phosphoserine mark. 3 residues coordinate alpha-D-glucose 1,6-bisphosphate: Glu376, Ser378, and Lys389. At Ser378 the chain carries Phosphoserine. Residue Lys419 is modified to N6-succinyllysine. Thr467 carries the phosphothreonine; by PAK1 modification. Phosphoserine occurs at positions 485 and 505. Thr507 is modified (phosphothreonine). Ser509 and Ser541 each carry phosphoserine.

Belongs to the phosphohexose mutase family. As to quaternary structure, monomer. It depends on Mg(2+) as a cofactor. Post-translationally, isoform 2 is the major calmodulin-dependent phosphoprotein in junctional skeletal sarcoplasmic reticulum vesicles. Phosphorylation at Thr-467 by PAK1 significantly enhances enzymatic activity.

The protein localises to the cytoplasm. The protein resides in the sarcoplasmic reticulum. It catalyses the reaction alpha-D-glucose 1-phosphate = alpha-D-glucose 6-phosphate. The enzyme catalyses O-phospho-L-seryl-[protein] + alpha-D-glucose 1-phosphate = alpha-D-glucose 1,6-bisphosphate + L-seryl-[protein]. It carries out the reaction alpha-D-glucose 1,6-bisphosphate + L-seryl-[protein] = O-phospho-L-seryl-[protein] + alpha-D-glucose 6-phosphate. With respect to regulation, glucose-1,6-bisphosphate enhances phosphorylation of the active site Ser-117, and thereby increases enzyme activity. Functionally, catalyzes the reversible isomerization of alpha-D-glucose 1-phosphate to alpha-D-glucose 6-phosphate. The mechanism proceeds via the intermediate compound alpha-D-glucose 1,6-bisphosphate. This enzyme participates in both the breakdown and synthesis of glucose. This chain is Phosphoglucomutase-1 (PGM1), found in Oryctolagus cuniculus (Rabbit).